The primary structure comprises 426 residues: Pistil-specific extensin-like protein (426 aa).

The signal sequence occupies residues Met-1–Ser-23. Disordered stretches follow at residues Gly-56–Leu-109 and Asn-121–Pro-254. 4 stretches are compositionally biased toward pro residues: residues Val-60–Pro-94, Pro-123–Pro-161, Pro-168–Pro-224, and Leu-231–Pro-254. 3 consecutive repeat copies span residues Ser-69–Pro-73, Ser-76–Pro-80, and Ser-83–Pro-87. The tract at residues Ser-69 to Pro-182 is 4 X 5 AA repeats of S-P(4). The stretch at Ser-178 to Pro-182 is repeat 4. Asn-310 carries an N-linked (GlcNAc...) asparagine glycan.

Pistil (stigma and style tissue).

The chain is Pistil-specific extensin-like protein from Nicotiana tabacum (Common tobacco).